Reading from the N-terminus, the 310-residue chain is Phosphoribosylaminoimidazole-succinocarboxamide synthase (310 aa).

Belongs to the SAICAR synthetase family.

It catalyses the reaction 5-amino-1-(5-phospho-D-ribosyl)imidazole-4-carboxylate + L-aspartate + ATP = (2S)-2-[5-amino-1-(5-phospho-beta-D-ribosyl)imidazole-4-carboxamido]succinate + ADP + phosphate + 2 H(+). Its pathway is purine metabolism; IMP biosynthesis via de novo pathway; 5-amino-1-(5-phospho-D-ribosyl)imidazole-4-carboxamide from 5-amino-1-(5-phospho-D-ribosyl)imidazole-4-carboxylate: step 1/2. This chain is Phosphoribosylaminoimidazole-succinocarboxamide synthase, found in Dechloromonas aromatica (strain RCB).